Reading from the N-terminus, the 269-residue chain is Ethylene-responsive transcription factor ERN1 (269 aa).

Polar residues predominate over residues 1 to 15 (MEIQFQQPNLQQHQK). Disordered stretches follow at residues 1–36 (MEIQ…NKFV) and 128–157 (DVPA…LSSG). A DNA-binding region (AP2/ERF) is located at residues 34-91 (KFVGVRQRPSGRWVAEIKDTTQKIRMWLGTFETAEEAARAYDEAACLLRGSNTRTNFI). Low complexity predominate over residues 128–146 (DVPAPSASTTSTSSNTSNS).

Belongs to the AP2/ERF transcription factor family. ERF subfamily.

The protein localises to the nucleus. Transcription factor involved in the symbiotic nodule signaling pathway in response to rhizobial stimulation. Functions as a transcriptional regulator required for root infection by symbiotic rhizobia, infection thread (IT) formation, and nodule development. May coordinate these processes. Functions downstream of the CCAMK-CYCLOPS complex. Probably not involved in arbuscular mycorrhizal (AM) symbiosis. The sequence is that of Ethylene-responsive transcription factor ERN1 from Lotus japonicus (Lotus corniculatus var. japonicus).